A 238-amino-acid polypeptide reads, in one-letter code: MTQALPRVVTIRELLEAGAHFGHPTNRWNPKMKPYIFTARNGIHIIDLQKTVTGLSRAYQFITELTARGEKVLFVGTKKQAQEAVMEEAVRSGQFYINQRWLGGTLTNFATIKRRLKLLSDLEEQRDRGDFARLTKAEAAKLEEKIVRLNRVFAGLKGMDRLPGAVFIIDPRKEELAVREAVKEGIPIVAMVDTNCDPDPIDYVIPCNDDAIRGIRLMAGKIADAAIEGTRRREMSQE.

Belongs to the universal ribosomal protein uS2 family.

This chain is Small ribosomal subunit protein uS2, found in Chloroflexus aurantiacus (strain ATCC 29366 / DSM 635 / J-10-fl).